We begin with the raw amino-acid sequence, 130 residues long: Methylglyoxal synthase (130 aa).

Residues 1–130 (MSKPRIALIA…DLARNMQDVC (130 aa)) form the MGS-like domain. Residues H11, K15, 37–40 (TGTT), and 57–58 (SG) contribute to the substrate site. D63 (proton donor/acceptor) is an active-site residue. H90 lines the substrate pocket.

This sequence belongs to the methylglyoxal synthase family.

It catalyses the reaction dihydroxyacetone phosphate = methylglyoxal + phosphate. In terms of biological role, catalyzes the formation of methylglyoxal from dihydroxyacetone phosphate. In Burkholderia cenocepacia (strain HI2424), this protein is Methylglyoxal synthase.